Here is a 309-residue protein sequence, read N- to C-terminus: Methionyl-tRNA formyltransferase (309 aa).

112 to 115 (SLLP) provides a ligand contact to (6S)-5,6,7,8-tetrahydrofolate.

This sequence belongs to the Fmt family.

It carries out the reaction L-methionyl-tRNA(fMet) + (6R)-10-formyltetrahydrofolate = N-formyl-L-methionyl-tRNA(fMet) + (6S)-5,6,7,8-tetrahydrofolate + H(+). Its function is as follows. Attaches a formyl group to the free amino group of methionyl-tRNA(fMet). The formyl group appears to play a dual role in the initiator identity of N-formylmethionyl-tRNA by promoting its recognition by IF2 and preventing the misappropriation of this tRNA by the elongation apparatus. The sequence is that of Methionyl-tRNA formyltransferase from Bartonella bacilliformis (strain ATCC 35685 / KC583 / Herrer 020/F12,63).